Here is a 282-residue protein sequence, read N- to C-terminus: Pantothenate synthetase (282 aa).

Residue 30–37 participates in ATP binding; the sequence is MGYLHEGH. His37 acts as the Proton donor in catalysis. Gln61 serves as a coordination point for (R)-pantoate. Position 61 (Gln61) interacts with beta-alanine. 147–150 lines the ATP pocket; sequence GMKD. Residue Gln153 coordinates (R)-pantoate. Residues Val176 and 184-187 contribute to the ATP site; that span reads KSSR.

The protein belongs to the pantothenate synthetase family. Homodimer.

It is found in the cytoplasm. It carries out the reaction (R)-pantoate + beta-alanine + ATP = (R)-pantothenate + AMP + diphosphate + H(+). The protein operates within cofactor biosynthesis; (R)-pantothenate biosynthesis; (R)-pantothenate from (R)-pantoate and beta-alanine: step 1/1. Functionally, catalyzes the condensation of pantoate with beta-alanine in an ATP-dependent reaction via a pantoyl-adenylate intermediate. The protein is Pantothenate synthetase of Geobacillus sp. (strain WCH70).